A 265-amino-acid chain; its full sequence is Osteoclast-associated immunoglobulin-like receptor (265 aa).

The N-terminal stretch at 1–18 (MVLSLILQLSTLWPACRA) is a signal peptide. Residues 19–231 (DFTPTAPLAS…LDYTQGNLIR (213 aa)) lie on the Extracellular side of the membrane. Ig-like domains lie at 22–115 (PTAP…SQPS) and 125–218 (QLPR…SFEG). The N-linked (GlcNAc...) asparagine glycan is linked to asparagine 47. The cysteines at positions 52 and 99 are disulfide-linked. Residue asparagine 144 is glycosylated (N-linked (GlcNAc...) asparagine). The chain crosses the membrane as a helical span at residues 232–248 (LGLAGMVLICLGIIVTC). Residues 249 to 265 (DWHSRSSAFDGLLPQQN) lie on the Cytoplasmic side of the membrane.

Belongs to the leukocyte receptor complex/polymeric immunoglobulin receptor (PIR/LRC) family. In terms of tissue distribution, specifically expressed in preosteoclasts or mature osteoclasts.

Its subcellular location is the cell membrane. Its function is as follows. Regulator of osteoclastogenesis which plays an important bone-specific function in osteoclast differentiation. The polypeptide is Osteoclast-associated immunoglobulin-like receptor (Oscar) (Mus musculus (Mouse)).